The following is a 353-amino-acid chain: S-adenosylmethionine:tRNA ribosyltransferase-isomerase (353 aa).

This sequence belongs to the QueA family. In terms of assembly, monomer.

The protein resides in the cytoplasm. The enzyme catalyses 7-aminomethyl-7-carbaguanosine(34) in tRNA + S-adenosyl-L-methionine = epoxyqueuosine(34) in tRNA + adenine + L-methionine + 2 H(+). The protein operates within tRNA modification; tRNA-queuosine biosynthesis. Transfers and isomerizes the ribose moiety from AdoMet to the 7-aminomethyl group of 7-deazaguanine (preQ1-tRNA) to give epoxyqueuosine (oQ-tRNA). This chain is S-adenosylmethionine:tRNA ribosyltransferase-isomerase, found in Nitrosomonas europaea (strain ATCC 19718 / CIP 103999 / KCTC 2705 / NBRC 14298).